Here is a 95-residue protein sequence, read N- to C-terminus: MADEKPKEGVKTENNDHINLKVAGQDGSVAQFKIRRHTPLSKLMKAYCERQGLSIRQIRFRVDGQPINETHTPAQLELEDEDTIDVLQQQTGGVY.

In terms of domain architecture, Ubiquitin-like spans 17-95 (HINLKVAGQD…VLQQQTGGVY (79 aa)). A Glycyl lysine isopeptide (Gly-Lys) (interchain with K-? in acceptor proteins) cross-link involves residue G93. A propeptide spanning residues 94–95 (VY) is cleaved from the precursor.

This sequence belongs to the ubiquitin family. SUMO subfamily. As to quaternary structure, interacts with SAE2. Covalently attached to a number of proteins.

Its function is as follows. Ubiquitin-like protein which can be covalently attached to target lysines as a monomer. Does not seem to be involved in protein degradation and may modulate protein subcellular localization, stability or activity. Upon oxidative stress, conjugates to various anti-oxidant enzymes, chaperones, and stress defense proteins. May also conjugate to NFKBIA, TFAP2A and FOS, negatively regulating their transcriptional activity, and to NR3C1, positively regulating its transcriptional activity. Covalent attachment to its substrates requires prior activation by the E1 complex SAE1-SAE2 and linkage to the E2 enzyme UBE2I. The sequence is that of Small ubiquitin-related modifier 4 (SUMO4) from Sus scrofa (Pig).